The following is a 343-amino-acid chain: Selenide, water dikinase (343 aa).

Residue U13 is part of the active site. Residue U13 is a non-standard amino acid, selenocysteine. Residues K16 and 44–46 contribute to the ATP site; that span reads TAD. D47 is a binding site for Mg(2+). ATP-binding positions include D64, D87, and 135–137; that span reads GHT. D87 is a binding site for Mg(2+). Mg(2+) is bound at residue D223.

It belongs to the selenophosphate synthase 1 family. Class I subfamily. Homodimer. The cofactor is Mg(2+).

The catalysed reaction is hydrogenselenide + ATP + H2O = selenophosphate + AMP + phosphate + 2 H(+). Synthesizes selenophosphate from selenide and ATP. This is Selenide, water dikinase from Geobacter metallireducens (strain ATCC 53774 / DSM 7210 / GS-15).